The chain runs to 132 residues: Histone H2A-alpha (132 aa).

Residue serine 2 is modified to N-acetylserine. An N6-acetyllysine mark is found at lysine 5 and lysine 9. The residue at position 106 (glutamine 106) is an N5-methylglutamine. Serine 129 bears the Phosphoserine mark. Residues serine 129–glutamine 130 carry the [ST]-Q motif motif.

This sequence belongs to the histone H2A family. As to quaternary structure, the nucleosome is a histone octamer containing two molecules each of H2A, H2B, H3 and H4 assembled in one H3-H4 heterotetramer and two H2A-H2B heterodimers. The octamer wraps approximately 147 bp of DNA. Interacts with mdb1 (via BRCT domain) in vitro; this interaction requires phosphorylation of this protein at the S/T-Q motif. In terms of processing, phosphorylated to form H2AS128ph (gamma-H2A) in response to DNA double-strand breaks (DSBs) generated by exogenous genotoxic agents and by stalled replication forks. Phosphorylation is dependent on the DNA damage checkpoint kinases rad3/ATR and tel1/ATM, spreads on either side of a detected DSB site and may mark the surrounding chromatin for recruitment of proteins required for DNA damage signaling and repair. Gamma-H2A is required for recruiting crb2, a modulator of DNA damage checkpoint signaling, to DSB sites. Gamma-H2A is removed from the DNA prior to the strand invasion-primer extension step of the repair process and subsequently dephosphorylated. Dephosphorylation is necessary for efficient recovery from the DNA damage checkpoint. Post-translationally, acetylated by esa1 to form H2AK4ac and H2AK7ac.

The protein resides in the nucleus. Its subcellular location is the chromosome. Core component of nucleosome which plays a central role in DNA double strand break (DSB) repair. Nucleosomes wrap and compact DNA into chromatin, limiting DNA accessibility to the cellular machineries which require DNA as a template. Histones thereby play a central role in transcription regulation, DNA repair, DNA replication and chromosomal stability. DNA accessibility is regulated via a complex set of post-translational modifications of histones, also called histone code, and nucleosome remodeling. This Schizosaccharomyces pombe (strain 972 / ATCC 24843) (Fission yeast) protein is Histone H2A-alpha (hta1).